Here is a 303-residue protein sequence, read N- to C-terminus: MNPQDLKTIVSSGLLSFPVTDFDEQGDFRPKTYIERLEWLAPYGATALFAAGGTGEFFSLTGDEYPLIIKTAVNTCAGKVPIIAGVGGPTRFAIACAQEAERLGAHGILLLPHYLMEAGQEGLIAHVEAVCKSVKFGVIVYNRNVCKLTPESLAILADRCPNLIGFKDGVGNIETMSSIFMKMGDRFSYLGGLPTAEVYAAAYKALGTPVYSSAVFNFIPKTAMDFYHAVASDDLATQHRLLRDFFMPYLALRNKNPGYAVSIVKAGATIVGHDAGPVRPPLTDLKPAEMEELAVLIKSLGPQ.

This sequence belongs to the DapA family.

It carries out the reaction 5-dehydro-4-deoxy-D-glucarate + H(+) = 2,5-dioxopentanoate + CO2 + H2O. The protein operates within carbohydrate acid metabolism; D-glucarate degradation; 2,5-dioxopentanoate from D-glucarate: step 2/2. The polypeptide is Probable 5-dehydro-4-deoxyglucarate dehydratase (Polaromonas naphthalenivorans (strain CJ2)).